The sequence spans 163 residues: Protein-export protein SecB (163 aa).

The protein belongs to the SecB family. As to quaternary structure, homotetramer, a dimer of dimers. One homotetramer interacts with 1 SecA dimer.

It is found in the cytoplasm. Its function is as follows. One of the proteins required for the normal export of preproteins out of the cell cytoplasm. It is a molecular chaperone that binds to a subset of precursor proteins, maintaining them in a translocation-competent state. It also specifically binds to its receptor SecA. The chain is Protein-export protein SecB from Brucella canis (strain ATCC 23365 / NCTC 10854 / RM-666).